A 179-amino-acid polypeptide reads, in one-letter code: Ribosome maturation factor RimM (179 aa).

Positions 95–174 constitute a PRC barrel domain; it reads KDEFFYFDIL…QIFCTQDAFL (80 aa).

Belongs to the RimM family. As to quaternary structure, binds ribosomal protein uS19.

The protein localises to the cytoplasm. Functionally, an accessory protein needed during the final step in the assembly of 30S ribosomal subunit, possibly for assembly of the head region. Essential for efficient processing of 16S rRNA. May be needed both before and after RbfA during the maturation of 16S rRNA. It has affinity for free ribosomal 30S subunits but not for 70S ribosomes. This Campylobacter jejuni subsp. jejuni serotype O:2 (strain ATCC 700819 / NCTC 11168) protein is Ribosome maturation factor RimM.